The sequence spans 333 residues: Mitochondrial glycine transporter (333 aa).

The segment at 1–25 (MTNAATDKSVASVARDVSTGKPGKS) is disordered. Solcar repeat units follow at residues 26–109 (PDAA…MRAA), 127–220 (LLPM…FKND), and 236–319 (RSSV…LIKS). The next 6 membrane-spanning stretches (helical) occupy residues 32-57 (LLSG…TRLQ), 84-110 (GAVP…RAAV), 133-158 (LATG…TRFE), 195-218 (GSVA…EGFK), 240-266 (INSS…KTRL), and 294-312 (GLSL…SWCI).

Belongs to the mitochondrial carrier (TC 2.A.29) family. SLC25A38 subfamily.

The protein localises to the mitochondrion inner membrane. The catalysed reaction is glycine(in) = glycine(out). Functionally, mitochondrial glycine transporter that imports glycine into the mitochondrial matrix. Plays an important role in providing glycine for the first enzymatic step in heme biosynthesis, the condensation of glycine with succinyl-CoA to produce 5-aminolevulinate (ALA) in the mitochondrial matrix. This Scheffersomyces stipitis (strain ATCC 58785 / CBS 6054 / NBRC 10063 / NRRL Y-11545) (Yeast) protein is Mitochondrial glycine transporter.